Consider the following 295-residue polypeptide: Cop9 signalosome-interactor 1 (295 aa).

Component of a COP9 signalosome-like (CSN) complex, composed of RRI1/CSN5, CSN9, RRI2/CSN10, PCI8/CSN11, CSN12 and CSI1. In the complex, it probably interacts directly with CSN9 and CSN12. Interacts also with RPN5.

The protein resides in the cytoplasm. It localises to the nucleus. Functionally, component of the COP9 signalosome (CSN) complex that acts as an regulator of the ubiquitin (Ubl) conjugation pathway by mediating the deneddylation of the cullin subunit of SCF-type E3 ubiquitin-protein ligase complexes The CSN complex is involved in the regulation of the mating pheromone response. The protein is Cop9 signalosome-interactor 1 (CSI1) of Saccharomyces cerevisiae (strain ATCC 204508 / S288c) (Baker's yeast).